The sequence spans 414 residues: MSKKIHGGSVVEMQGDEMTRIIWELIKEKLILPYVELDLHSYDLGIENRDATNDQVTKDAAEAIKKYNVGVKCATITPDEKRVEEFKLKQMWKSPNGTIRNILGGTVFREAIICKNIPRLVTGWVKPIIIGRHAYGDQYRATDFVVPGPGKVEITFTPKDGSQKVTYLVHSFEEGGGVAMGMYNQDKSIEDFAHSSFQMALSKGWPLYLSTKNTILKKYDGRFKDIFQEIYDKQYKSQFEAQKIWYEHRLIDDMVAQAMKSEGGFIWACKNYDGDVQSDSVAQGYGSLGMMTSVLICPDGKTVEAEAAHGTVTRHYRMHQKGQETSTNPIASIFAWSRGLAHRARLDNNTELSFFAKALEEVCIETIEAGFMTKDLAACIKGLPNVQRSDYLNTFEFMDKLGENLKAKLAQAKL.

At Ser-2 the chain carries N-acetylserine. Tyr-42 is subject to Phosphotyrosine. 75–77 (TIT) is a binding site for NADP(+). Residue Thr-77 coordinates substrate. Lys-81 is subject to N6-acetyllysine. Arg-82 provides a ligand contact to NADP(+). Residues 94–100 (SPNGTIR) and Arg-109 contribute to the substrate site. At Lys-126 the chain carries N6-succinyllysine. Residues Arg-132 and Lys-212 each coordinate substrate. N6-acetyllysine occurs at positions 224, 233, and 243. Asp-252 serves as a coordination point for Mn(2+). Lys-260 provides a ligand contact to NADP(+). Positions 275 and 279 each coordinate Mn(2+). 310 to 315 (GTVTRH) is a binding site for NADP(+). Lys-321 is subject to N6-acetyllysine. Asn-328 provides a ligand contact to NADP(+). Phosphoserine is present on Ser-389. Lys-400 carries the N6-succinyllysine modification.

The protein belongs to the isocitrate and isopropylmalate dehydrogenases family. Homodimer. Requires Mg(2+) as cofactor. Mn(2+) is required as a cofactor. Acetylation at Lys-374 dramatically reduces catalytic activity.

The protein localises to the cytoplasm. Its subcellular location is the cytosol. It carries out the reaction D-threo-isocitrate + NADP(+) = 2-oxoglutarate + CO2 + NADPH. Its function is as follows. Catalyzes the NADP(+)-dependent oxidative decarboxylation of isocitrate (D-threo-isocitrate) to 2-ketoglutarate (2-oxoglutarate), which is required by other enzymes such as the phytanoyl-CoA dioxygenase. Plays a critical role in the generation of NADPH, an important cofactor in many biosynthesis pathways. May act as a corneal epithelial crystallin and may be involved in maintaining corneal epithelial transparency. This chain is Isocitrate dehydrogenase [NADP] cytoplasmic (IDH1), found in Microtus mexicanus (Mexican vole).